The primary structure comprises 130 residues: Small ribosomal subunit protein uS8 (130 aa).

Belongs to the universal ribosomal protein uS8 family. Part of the 30S ribosomal subunit. Contacts proteins S5 and S12.

One of the primary rRNA binding proteins, it binds directly to 16S rRNA central domain where it helps coordinate assembly of the platform of the 30S subunit. The protein is Small ribosomal subunit protein uS8 of Edwardsiella ictaluri (strain 93-146).